We begin with the raw amino-acid sequence, 144 residues long: Maximins 2/H8 type 2 (144 aa).

Positions 1 to 18 (MNFKYIVAVSFLIASAYA) are cleaved as a signal peptide. Positions 19–43 (RSEENEIQSLSQRDVLEEESLREIR) are excised as a propeptide. N70 carries the post-translational modification Asparagine amide. Positions 74–123 (TAEEHEVMKRLETVMRDLDSLDYPEEASERETRGFNQEEIANLFTKKEKR) are excised as a propeptide. I143 is subject to Isoleucine amide.

The protein belongs to the bombinin family. In terms of tissue distribution, expressed by the skin glands.

The protein localises to the secreted. In terms of biological role, maximin-2 shows antibacterial activity against both Gram-positive and Gram-negative bacteria. It also shows antimicrobial activity against the fungus C.albicans, but not against A.flavus nor P.uticale. It has little hemolytic activity. Maximin-H8 shows antimicrobial activity against bacteria and against the fungus C.albicans. Shows strong hemolytic activity. This is Maximins 2/H8 type 2 from Bombina maxima (Giant fire-bellied toad).